The following is a 327-amino-acid chain: Aldo-keto reductase FVEG_12638 (327 aa).

Aspartate 51 contacts NADP(+). Tyrosine 56 (proton donor) is an active-site residue. Position 122 (histidine 122) interacts with substrate. NADP(+)-binding positions include serine 152–glutamate 153, glycine 202–aspartate 212, and glutamate 286–glutamate 294.

This sequence belongs to the aldo/keto reductase family. Aldo/keto reductase 2 subfamily.

In terms of biological role, aldo-keto reductase; part of the Fusarium detoxification of benzoxazolinone cluster 2 (FDB2) involved in the degradation of benzoxazolinones produced by the host plant. Maize, wheat, and rye produce the 2 benzoxazinone phytoanticipins 2,4-dihy-droxy-7-methoxy-1,4-benzoxazin-3-one (DIMBOA) and 2,4-dihydroxy-1,4-benzoxazin-3-one (DIBOA) that, due to their inherent instability once released, spontaneously degrade to the more stable corresponding benzoxazolinones, 6-methoxy-2-benzoxazolinone (MBOA) and 2-benzoxazolinone (BOA), respectively. The first step in the detoxification of benzoxazolinones involves the hydrolysis of the cyclic ester bond of benzoxazolinones by the FDB1 cluster gamma-lactamase MBL1 to aminophenols. MBL1 is able to convert BOA into 2-aminophenol (2-AP), as well as MBOA into 5-methoxy-2-aminophenol (2-AMP). The FDB2 cluster N-malonyltransferase FDB2/NAT1 then metabolizes aminophenols via N-malonylation to non-toxic malonamic acids. FDB2/NAT1 converts 2-AP into N-(2-hydroxyphenyl) malonamic acid (HPMA) and 2-AMP into N-(2-hydroxy-4-methoxyphenyl) malonamic acid (HMPMA). The duplicated dienlactone hydrolases DLH1 and DLH2 may provide redundant function for hydrolyzing the lactone moiety in the BOA molecule. The roles of the amidases an other enzymes encoded by the 2 FDB clusters have not been identified so far. The polypeptide is Aldo-keto reductase FVEG_12638 (Gibberella moniliformis (strain M3125 / FGSC 7600) (Maize ear and stalk rot fungus)).